Reading from the N-terminus, the 385-residue chain is Cytochrome b (385 aa).

Helical transmembrane passes span 32 to 52, 76 to 98, 113 to 133, and 179 to 199; these read FGSL…TLAM, WLVR…LHIG, TWAI…LGYV, and FFAL…MHLI. The heme b site is built by His82 and His96. Residues His183 and His197 each coordinate heme b. An a ubiquinone-binding site is contributed by His202. Helical transmembrane passes span 226–246, 290–310, 322–342, and 349–369; these read FVFK…IFVF, LLGV…PITD, LSKV…QIGA, and FIEF…VIVP.

It belongs to the cytochrome b family. Fungal cytochrome b-c1 complex contains 10 subunits; 3 respiratory subunits, 2 core proteins and 5 low-molecular weight proteins. Cytochrome b-c1 complex is a homodimer. It depends on heme b as a cofactor.

Its subcellular location is the mitochondrion inner membrane. Functionally, component of the ubiquinol-cytochrome c reductase complex (complex III or cytochrome b-c1 complex) that is part of the mitochondrial respiratory chain. The b-c1 complex mediates electron transfer from ubiquinol to cytochrome c. Contributes to the generation of a proton gradient across the mitochondrial membrane that is then used for ATP synthesis. This Aspergillus terreus (strain NIH 2624 / FGSC A1156) protein is Cytochrome b (cob).